Consider the following 222-residue polypeptide: MAASPDLTGFALDRARMIDTQLRQRGIRDERVLNAMATIPREEFVVARYHPDAYADHPLPIPLGQTISQPYIVARMLEAAQIAPADKVLEVGTGTGYQAALLGALAAQVFTIERHAELAALARIHLEHLGYTNISVITGDGSEGLADQAPFDVILVAAAVPDFPPALFHQLAEGGRMVIPVGSPELQALYVVRKQAGRLQRTKLDDCRFVPLIGNQGYSPAR.

The active site involves S68.

The protein belongs to the methyltransferase superfamily. L-isoaspartyl/D-aspartyl protein methyltransferase family.

The protein localises to the cytoplasm. It catalyses the reaction [protein]-L-isoaspartate + S-adenosyl-L-methionine = [protein]-L-isoaspartate alpha-methyl ester + S-adenosyl-L-homocysteine. Its function is as follows. Catalyzes the methyl esterification of L-isoaspartyl residues in peptides and proteins that result from spontaneous decomposition of normal L-aspartyl and L-asparaginyl residues. It plays a role in the repair and/or degradation of damaged proteins. The sequence is that of Protein-L-isoaspartate O-methyltransferase from Koribacter versatilis (strain Ellin345).